The chain runs to 432 residues: Amino-acid acetyltransferase (432 aa).

The N-acetyltransferase domain occupies 286 to 425; it reads ELVREAAIED…ASLYNYQRNS (140 aa).

The protein belongs to the acetyltransferase family. ArgA subfamily.

The protein resides in the cytoplasm. It carries out the reaction L-glutamate + acetyl-CoA = N-acetyl-L-glutamate + CoA + H(+). It functions in the pathway amino-acid biosynthesis; L-arginine biosynthesis; N(2)-acetyl-L-ornithine from L-glutamate: step 1/4. The protein is Amino-acid acetyltransferase of Pseudomonas fluorescens (strain Pf0-1).